The chain runs to 473 residues: FAD-dependent monooxygenase ctvC (473 aa).

FAD is bound by residues E37, A51, and R110. The helical transmembrane segment at 218–238 threads the bilayer; it reads IGPGFTFLIFPAAGDSLFWVL. Residues D310 and A323 each contribute to the FAD site. Residue N358 is glycosylated (N-linked (GlcNAc...) asparagine). A helical membrane pass occupies residues 451-471; sequence LVYCFGVVILLWISWAVFNVN.

It belongs to the paxM FAD-dependent monooxygenase family. Requires FAD as cofactor.

Its subcellular location is the membrane. The protein operates within mycotoxin biosynthesis. In terms of biological role, FAD-dependent monooxygenase; part of the gene cluster that mediates the biosynthesis of citreoviridin, an inhibitor of the of F1-ATPase beta-subunit. The HR-PKS ctvA accepts acetyl-CoA as the starter unit and catalyzes eight iterations of malonyl-CoA extension and four iterations of SAM-dependent methylation at C4, C12, C14, and C16. The KR and DH domains selectively act on the first six iterations to generate the hexaene chain. In the last three iterations, the KR and DH domains terminate their functions to yield a beta,delta-diketo ester moiety, which then undergoes intramolecular cyclization to yield an alpha-pyrone intermediate. Subsequently, ctvB methylates the alpha-pyrone hydroxyl group to generate citreomontanin. In order to form the tetrahydrofuran ring with the correct stereochemistry, the terminal alkenes of citreomontanin need to undergo isomerization to yield a (17Z)-hexaene, a step that could be catalyzed by ctvC. The (17Z)-hexaene then undergoes bisepoxidation by ctvC to form a (17R,16R,15S,14R)-bisepoxide moiety. Lastly, ctvD acts as a regioselective hydrolase to form the tetrahydrofuran ring with the substituents in the correct absolute configuration, completing the biosynthesis of citreoviridin. The polypeptide is FAD-dependent monooxygenase ctvC (Aspergillus terreus (strain NIH 2624 / FGSC A1156)).